A 365-amino-acid polypeptide reads, in one-letter code: Protein SGT1 homolog (365 aa).

A2 carries the post-translational modification N-acetylalanine. TPR repeat units lie at residues S11–D44, A45–N78, and S79–T112. One can recognise a CS domain in the interval Q169–E258. T265 carries the post-translational modification Phosphothreonine. The 90-residue stretch at L276–Y365 folds into the SGS domain. Residue S281 is modified to Phosphoserine. Phosphothreonine is present on T284. A Glycyl lysine isopeptide (Lys-Gly) (interchain with G-Cter in SUMO1); alternate cross-link involves residue K295. K295 is covalently cross-linked (Glycyl lysine isopeptide (Lys-Gly) (interchain with G-Cter in SUMO2); alternate). S331 bears the Phosphoserine mark.

The protein belongs to the SGT1 family. In terms of assembly, probably associates with SCF (SKP1-CUL1-F-box protein) complex through interaction with SKP1. Interacts with S100A6. Interacts with HSP90. In terms of processing, phosphorylated at Ser-281 and Ser-331, dephosphorylation promotes nuclear translocation, most likely due to disruption of the SUGT1-HSP90 complex.

It is found in the cytoplasm. Its subcellular location is the nucleus. Its function is as follows. May play a role in ubiquitination and subsequent proteasomal degradation of target proteins. This Homo sapiens (Human) protein is Protein SGT1 homolog.